The primary structure comprises 156 residues: Snaclec A11 (156 aa).

An N-terminal signal peptide occupies residues 1 to 23; it reads MGRSISVSFGLLVVFLSLSGTGA. 3 disulfides stabilise this stretch: Cys27/Cys38, Cys55/Cys154, and Cys129/Cys146. One can recognise a C-type lectin domain in the interval 34 to 155; the sequence is YDQHCYQAVD…CGQPYRFTCE (122 aa).

This sequence belongs to the snaclec family. Heterodimer; disulfide-linked. In terms of tissue distribution, expressed by the venom gland.

The protein resides in the secreted. Interferes with one step of hemostasis (modulation of platelet aggregation, or coagulation cascade, for example). This chain is Snaclec A11, found in Macrovipera lebetinus (Levantine viper).